A 154-amino-acid chain; its full sequence is Myoglobin (154 aa).

Residues 2–148 (GLSDQEWQHV…FRNDMASKYK (147 aa)) form the Globin domain. Histidine 65 is a binding site for nitrite. Histidine 65 contributes to the O2 binding site. Histidine 94 lines the heme b pocket.

It belongs to the globin family. In terms of assembly, monomeric.

The protein resides in the cytoplasm. It localises to the sarcoplasm. It carries out the reaction Fe(III)-heme b-[protein] + nitric oxide + H2O = Fe(II)-heme b-[protein] + nitrite + 2 H(+). The enzyme catalyses H2O2 + AH2 = A + 2 H2O. Monomeric heme protein which primary function is to store oxygen and facilitate its diffusion within muscle tissues. Reversibly binds oxygen through a pentacoordinated heme iron and enables its timely and efficient release as needed during periods of heightened demand. Depending on the oxidative conditions of tissues and cells, and in addition to its ability to bind oxygen, it also has a nitrite reductase activity whereby it regulates the production of bioactive nitric oxide. Under stress conditions, like hypoxia and anoxia, it also protects cells against reactive oxygen species thanks to its pseudoperoxidase activity. In Uria lomvia (Thick-billed murre), this protein is Myoglobin (MB).